The following is a 100-amino-acid chain: Urease subunit gamma (100 aa).

It belongs to the urease gamma subunit family. In terms of assembly, heterotrimer of UreA (gamma), UreB (beta) and UreC (alpha) subunits. Three heterotrimers associate to form the active enzyme.

It localises to the cytoplasm. The catalysed reaction is urea + 2 H2O + H(+) = hydrogencarbonate + 2 NH4(+). Its pathway is nitrogen metabolism; urea degradation; CO(2) and NH(3) from urea (urease route): step 1/1. This is Urease subunit gamma from Chromohalobacter salexigens (strain ATCC BAA-138 / DSM 3043 / CIP 106854 / NCIMB 13768 / 1H11).